The primary structure comprises 299 residues: UTP--glucose-1-phosphate uridylyltransferase (299 aa).

Belongs to the UDPGP type 2 family.

The enzyme catalyses alpha-D-glucose 1-phosphate + UTP + H(+) = UDP-alpha-D-glucose + diphosphate. It functions in the pathway carbohydrate metabolism; nucleotide-sugar metabolism. It participates in capsule biogenesis; capsule polysaccharide biosynthesis. This Streptococcus pneumoniae serotype 4 (strain ATCC BAA-334 / TIGR4) protein is UTP--glucose-1-phosphate uridylyltransferase (cap4C).